Reading from the N-terminus, the 1370-residue chain is DNA-directed RNA polymerase subunit beta (1370 aa).

The protein belongs to the RNA polymerase beta chain family. In terms of assembly, the RNAP catalytic core consists of 2 alpha, 1 beta, 1 beta' and 1 omega subunit. When a sigma factor is associated with the core the holoenzyme is formed, which can initiate transcription.

The catalysed reaction is RNA(n) + a ribonucleoside 5'-triphosphate = RNA(n+1) + diphosphate. Its function is as follows. DNA-dependent RNA polymerase catalyzes the transcription of DNA into RNA using the four ribonucleoside triphosphates as substrates. In Verminephrobacter eiseniae (strain EF01-2), this protein is DNA-directed RNA polymerase subunit beta.